The sequence spans 194 residues: Small ribosomal subunit protein uS5 (194 aa).

Positions 26-89 (LEEKVVEIRR…ADAKKRIIKV (64 aa)) constitute an S5 DRBM domain.

This sequence belongs to the universal ribosomal protein uS5 family. As to quaternary structure, part of the 30S ribosomal subunit. Contacts proteins S4 and S8.

With S4 and S12 plays an important role in translational accuracy. Its function is as follows. Located at the back of the 30S subunit body where it stabilizes the conformation of the head with respect to the body. The sequence is that of Small ribosomal subunit protein uS5 from Sulfurihydrogenibium sp. (strain YO3AOP1).